A 446-amino-acid chain; its full sequence is CBL-interacting serine/threonine-protein kinase 24 (446 aa).

The region spanning 11–264 is the Protein kinase domain; that stretch reads YEVGRTIGEG…IQGIKKDPWF (254 aa). ATP-binding positions include 17–25 and Lys-40; that span reads IGEGTFAKV. Residue Asp-134 is the Proton acceptor of the active site. An activation loop region spans residues 152–179; sequence DFGLSALPQEGVELLRTTCGTPNYVAPE. Residue Ser-156 is modified to Phosphoserine. Thr-168 carries the phosphothreonine modification. One can recognise an NAF domain in the interval 305 to 329; sequence EGPLMMNAFEMITLSQGLNLSALFD. The tract at residues 336–365 is PPI; that stretch reads KRQTRFVSRREPSEIIANIEAVANSMGFKS.

It belongs to the protein kinase superfamily. CAMK Ser/Thr protein kinase family. SNF1 subfamily. Interacts with CBL1, CBL2, CBL4/SOS3, CBL5, CBL9, CBL10 and with the protein phosphatase 2C ABI2. It depends on Mn(2+) as a cofactor. In terms of processing, autophosphorylated.

It is found in the cytoplasm. The protein localises to the nucleus. It catalyses the reaction L-seryl-[protein] + ATP = O-phospho-L-seryl-[protein] + ADP + H(+). The enzyme catalyses L-threonyl-[protein] + ATP = O-phospho-L-threonyl-[protein] + ADP + H(+). Involved in the regulatory pathway for the control of intracellular Na(+) and K(+) homeostasis and salt tolerance. Activates the vacuolar H(+)/Ca(2+) antiporter CAX1 and operates in synergy with CBL4/SOS3 to activate the plasma membrane Na(+)/H(+) antiporter SOS1. CIPK serine-threonine protein kinases interact with CBL proteins. Binding of a CBL protein to the regulatory NAF domain of CIPK protein lead to the activation of the kinase in a calcium-dependent manner. Phosphorylates CBL1, CBL4 and CBL10. The chain is CBL-interacting serine/threonine-protein kinase 24 (CIPK24) from Arabidopsis thaliana (Mouse-ear cress).